Here is a 147-residue protein sequence, read N- to C-terminus: NADH-quinone oxidoreductase subunit A (147 aa).

Helical transmembrane passes span F16–F36, F68–W88, and V98–V118.

It belongs to the complex I subunit 3 family. NDH-1 is composed of 13 different subunits. Subunits NuoA, H, J, K, L, M, N constitute the membrane sector of the complex.

The protein localises to the cell inner membrane. It catalyses the reaction a quinone + NADH + 5 H(+)(in) = a quinol + NAD(+) + 4 H(+)(out). NDH-1 shuttles electrons from NADH, via FMN and iron-sulfur (Fe-S) centers, to quinones in the respiratory chain. The immediate electron acceptor for the enzyme in this species is believed to be ubiquinone. Couples the redox reaction to proton translocation (for every two electrons transferred, four hydrogen ions are translocated across the cytoplasmic membrane), and thus conserves the redox energy in a proton gradient. The polypeptide is NADH-quinone oxidoreductase subunit A (Shigella boydii serotype 18 (strain CDC 3083-94 / BS512)).